Consider the following 415-residue polypeptide: Serine hydroxymethyltransferase 1 (415 aa).

(6S)-5,6,7,8-tetrahydrofolate contacts are provided by residues Leu-122 and 126–128; that span reads GHL. Lys-230 carries the N6-(pyridoxal phosphate)lysine modification.

It belongs to the SHMT family. Homodimer. Pyridoxal 5'-phosphate is required as a cofactor.

The protein resides in the cytoplasm. It carries out the reaction (6R)-5,10-methylene-5,6,7,8-tetrahydrofolate + glycine + H2O = (6S)-5,6,7,8-tetrahydrofolate + L-serine. The protein operates within one-carbon metabolism; tetrahydrofolate interconversion. It functions in the pathway amino-acid biosynthesis; glycine biosynthesis; glycine from L-serine: step 1/1. In terms of biological role, catalyzes the reversible interconversion of serine and glycine with tetrahydrofolate (THF) serving as the one-carbon carrier. This reaction serves as the major source of one-carbon groups required for the biosynthesis of purines, thymidylate, methionine, and other important biomolecules. Also exhibits THF-independent aldolase activity toward beta-hydroxyamino acids, producing glycine and aldehydes, via a retro-aldol mechanism. In Ralstonia nicotianae (strain ATCC BAA-1114 / GMI1000) (Ralstonia solanacearum), this protein is Serine hydroxymethyltransferase 1.